A 325-amino-acid polypeptide reads, in one-letter code: Melanocortin receptor 5 (325 aa).

Residues 1 to 37 (MNSSSHLTLLDLTLNASEDNILGQNVNNKSSACEDMG) are Extracellular-facing. 3 N-linked (GlcNAc...) asparagine glycosylation sites follow: N2, N15, and N28. A helical membrane pass occupies residues 38-61 (IAVEVFLTLGLVSLLENILVIGAI). Residues 62–73 (VKNKNLHSPMYF) lie on the Cytoplasmic side of the membrane. A helical membrane pass occupies residues 74-97 (FVGSLAVADMLVSMSNAWETITIY). Residues 98 to 114 (LINNKHVVIADTFVRHI) are Extracellular-facing. The helical transmembrane segment at 115 to 138 (DNVFDSMICISVVASMCSLLAIAV) threads the bilayer. Over 139 to 155 (DRYITIFYALRYHHIMT) the chain is Cytoplasmic. Residues 156-179 (ARRSGVIIACIWTFCISCGIVFII) form a helical membrane-spanning segment. At 180–186 (YYESKYV) the chain is on the extracellular side. A helical membrane pass occupies residues 187–211 (IVCLISMFFTMLFFMVSLYIHMFLL). The Cytoplasmic portion of the chain corresponds to 212–239 (ARNHVKRIAASPRYNSVRQRASMKGAIT). A helical transmembrane segment spans residues 240 to 265 (LTMLLGIFIVCWSPFFLHLILMISCP). Residues 266 to 273 (QNVYCACF) lie on the Extracellular side of the membrane. A helical transmembrane segment spans residues 274–297 (MSYFNMYLILIMCNSVIDPLIYAL). Residues 298-325 (RSQEMRRTFKEIICCHGFRRTCTLLGRY) lie on the Cytoplasmic side of the membrane. Residues C311 and C312 are each lipidated (S-palmitoyl cysteine).

It belongs to the G-protein coupled receptor 1 family. Very low expression levels is detected in brain, while high levels are found in adrenals, stomach, lung and spleen.

It is found in the cell membrane. Its function is as follows. Receptor for MSH (alpha, beta and gamma) and ACTH. The activity of this receptor is mediated by G proteins which activate adenylate cyclase. This receptor is a possible mediator of the immunomodulation properties of melanocortins. This chain is Melanocortin receptor 5 (Mc5r), found in Rattus norvegicus (Rat).